Here is a 1447-residue protein sequence, read N- to C-terminus: MKKLFVVLVVMPLIYGDNFPCSKLTNRTIGNQWNLIETFLLNYSSRLPPNSDVVLGDYFPTVQPWFNCIRNNSNDLYVTLENLKALYWDYATENITWNHRQRLNVVVNGYPYSITVTTTRNFNSAEGAIICICKGSPPTTTTESSLTCNWGSECRLNHKFPICPSNSEANCGNMLYGLQWFADEVVAYLHGASYRISFENQWSGTVTFGDMRATTLEVSGTLVDLWWFNPVYDVSYYRVNNKNGTTVVSNCTDQCASYVANVFTTQPGGFIPSDFSFNNWFLLTNSSTLVSGKLVTKQPLLVNCLWPVPSFEEAASTFCFEGAGFDQCNGAVLNNTVDVIRFNLNFTTNVQSGKGATVFSLNTTGGVTLEISCYTVSDSSFFSYGEIPFGVTDGPRYCYVHYNGTALKYLGTLPPSVKEIAISKWGHFYINGYNFFSTFPIDCISFNLTTGDSDVFWTIAYTSYTEALVQVENTAITKVTYCNSHVNNIKCSQITANLNNGFYPVSSSEVGLVNKSVVLLPSFYTHTIVNITIGLGMKRSGYGQPIASTLSNITLPMQDHNTDVYCIRSDQFSVYVHSTCKSALWDNIFKRNCTDVLDATAVIKTGTCPFSFDKLNNYLTFNKFCLSLSPVGANCKFDVAARTRTNEQVVRSLYVIYEEGDNIVGVPSDNSGVHDLSVLHLDSCTDYNIYGRTGVGIIRKTNRTLLSGLYYTSLSGDLLGFKNVSDGVIYSVTPCDVSAQAAVIDGTIVGAITSINSELLGLTHWTTTPNFYYYSIYNYTNDRTRGTAIDSNDVDCEPVITYSNIGVCKNGAFVFINVTHSDGDVQPISTGNVTIPTNFTISVQVEYIQVYTTPVSIDCSRYVCNGNPRCNKLLTQYVSACQTIEQALAMGARLENMEVDSMLFVSENALKLASVEAFNSSETLDPIYKEWPNIGGSWLEGLKYILPSHNSKRKYRSAIEDLLFDKVVTSGLGTVDEDYKRCTGGYDIADLVCAQYYNGIMVLPGVANADKMTMYTASLAGGITLGALGGGAVAIPFAVAVQARLNYVALQTDVLNKNQQILASAFNQAIGNITQSFGKVNDAIHXTSRGLATVAKALAKVQDVVXIQGQALSHLTVQLQNNFQAISSSISDIYNRLDELSADAQVDRLITGRLTALNAFVSQTLTRQAEVRASRQLAKDKVNECVRSQSQRFGFCGNGTHLFSLANAAPNGMIFFHTVLLPTAYETVTAWPGICASDGDRTFGLVVKDVQLTLFRNLDDKFYLTPRTMYQPRVATSSDFVQIEGCDVLFVNATVSDLPSIIPDYIDINQTVQDILENFRPNWTVPELTFDIFNATYLNLTGEIDDLEFRSEKLHNTTVELAILIDNINNTLVNLEWLNRIETYVKWPWYVWLLIGLVVIFCIPLLLFCCCSTGCCGCIGCLGSCCHSICSRRQFENYEPIEKVHVH.

Positions 1 to 28 (MKKLFVVLVVMPLIYGDNFPCSKLTNRT) are cleaved as a signal peptide. 2 S1 regions span residues 17–774 (DNFP…FYYY) and 29–774 (IGNQ…FYYY). The Virion surface segment spans residues 29–1388 (IGNQWNLIET…NRIETYVKWP (1360 aa)). The interval 655–799 (VIYEEGDNIV…DSNDVDCEPV (145 aa)) is interaction with host ANPEP. Positions 775 to 1447 (SIYNYTNDRT…YEPIEKVHVH (673 aa)) are S2. The segment at 1020-1041 (AGGITLGALGGGAVAIPFAVAV) is fusion peptide. Positions 1035-1154 (IPFAVAVQAR…QVDRLITGRL (120 aa)) are heptad repeat 1 (HR1). Coiled-coil stretches lie at residues 1102–1146 (QDVV…DAQV) and 1336–1378 (TYLN…LEWL). The segment at 1303–1400 (PDYIDINQTV…VWLLIGLVVI (98 aa)) is heptad repeat 2 (HR2). The helical transmembrane segment at 1389–1408 (WYVWLLIGLVVIFCIPLLLF) threads the bilayer. Residues 1409 to 1447 (CCCSTGCCGCIGCLGSCCHSICSRRQFENYEPIEKVHVH) are Intravirion-facing. Positions 1443–1447 (KVHVH) match the KxHxx motif.

The protein belongs to the alphacoronaviruses spike protein family. In terms of assembly, homotrimer. During virus morphogenesis, found in a complex with M and HE proteins. Interacts with host ANPEP.

It localises to the virion membrane. The protein resides in the host endoplasmic reticulum-Golgi intermediate compartment membrane. S1 region attaches the virion to the cell membrane by interacting with host ANPEP/aminopeptidase N, initiating the infection. Binding to the receptor probably induces conformational changes in the S glycoprotein unmasking the fusion peptide of S2 region and activating membranes fusion. S2 region belongs to the class I viral fusion protein. Under the current model, the protein has at least 3 conformational states: pre-fusion native state, pre-hairpin intermediate state, and post-fusion hairpin state. During viral and target cell membrane fusion, the coiled coil regions (heptad repeats) regions assume a trimer-of-hairpins structure, positioning the fusion peptide in close proximity to the C-terminal region of the ectodomain. The formation of this structure appears to drive apposition and subsequent fusion of viral and target cell membranes. The sequence is that of Spike glycoprotein from Sus scrofa (Pig).